A 284-amino-acid polypeptide reads, in one-letter code: Proteasome subunit beta (284 aa).

Positions 1–56 (MSPMESSSTRFPGQALPAAYLTPGSSSFTDFLRVAAPELMPGSRPVPDGAVEAPHG) are cleaved as a propeptide — removed in mature form; by autocatalysis. The active-site Nucleophile is Thr57.

Belongs to the peptidase T1B family. The 20S proteasome core is composed of 14 alpha and 14 beta subunits that assemble into four stacked heptameric rings, resulting in a barrel-shaped structure. The two inner rings, each composed of seven catalytic beta subunits, are sandwiched by two outer rings, each composed of seven alpha subunits. The catalytic chamber with the active sites is on the inside of the barrel. Has a gated structure, the ends of the cylinder being occluded by the N-termini of the alpha-subunits. Is capped by the proteasome-associated ATPase, ARC.

It is found in the cytoplasm. The catalysed reaction is Cleavage of peptide bonds with very broad specificity.. The protein operates within protein degradation; proteasomal Pup-dependent pathway. With respect to regulation, the formation of the proteasomal ATPase ARC-20S proteasome complex, likely via the docking of the C-termini of ARC into the intersubunit pockets in the alpha-rings, may trigger opening of the gate for substrate entry. Interconversion between the open-gate and close-gate conformations leads to a dynamic regulation of the 20S proteasome proteolysis activity. Component of the proteasome core, a large protease complex with broad specificity involved in protein degradation. This is Proteasome subunit beta from Saccharopolyspora erythraea (strain ATCC 11635 / DSM 40517 / JCM 4748 / NBRC 13426 / NCIMB 8594 / NRRL 2338).